A 104-amino-acid chain; its full sequence is L-rhamnose mutarotase (104 aa).

A substrate-binding site is contributed by Tyr18. His22 serves as the catalytic Proton donor. Substrate is bound by residues Tyr41 and 76–77 (WW).

It belongs to the rhamnose mutarotase family. Homodimer.

The protein localises to the cytoplasm. It carries out the reaction alpha-L-rhamnose = beta-L-rhamnose. It participates in carbohydrate metabolism; L-rhamnose metabolism. Involved in the anomeric conversion of L-rhamnose. This Jannaschia sp. (strain CCS1) protein is L-rhamnose mutarotase.